The primary structure comprises 102 residues: Auxin-responsive protein SAUR68 (102 aa).

Belongs to the ARG7 family.

It localises to the cell membrane. May promote auxin-stimulated organ elongation, such as hypocotyls, stamen filaments and petals. This is Auxin-responsive protein SAUR68 from Arabidopsis thaliana (Mouse-ear cress).